Reading from the N-terminus, the 234-residue chain is Sugar fermentation stimulation protein A (234 aa).

A DNA-binding region (H-T-H motif) is located at residues 201–220; sequence LLSEAQNKGVEVLAYKAELS.

The protein belongs to the SfsA family.

Its function is as follows. Binds to DNA non-specifically. Could be a regulatory factor involved in maltose metabolism. In Salmonella typhi, this protein is Sugar fermentation stimulation protein A.